Reading from the N-terminus, the 356-residue chain is Mitogen-activated protein kinase PMK11 (356 aa).

The Protein kinase domain maps to 24–312 (YDIQDVVGEG…VEEALKHPYL (289 aa)). ATP contacts are provided by residues 30–38 (VGEGAYGVV) and K53.

The protein belongs to the protein kinase superfamily. CMGC Ser/Thr protein kinase family. MAP kinase subfamily. The cofactor is Mg(2+). Post-translationally, phosphorylated by MST7.

It carries out the reaction L-seryl-[protein] + ATP = O-phospho-L-seryl-[protein] + ADP + H(+). It catalyses the reaction L-threonyl-[protein] + ATP = O-phospho-L-threonyl-[protein] + ADP + H(+). Its function is as follows. Mitogen-activated protein kinase; part of the MST11-MST7-PMK1 MAP kinase (MAPK) cascade that is essential for appressorium formation, penetration and invasive growth. Central regulator of appressorium development that acts downstream of the cAMP signal. The MST11-MST7-PMK1 MAP kinase cascade transduces signals from the cell surface sensors MDB2 and SHO1 that recognize various surface signals such as surface hydrophobicity, cutin monomers, and rice leaf waxes. Regulates expression of secreted fungal effector proteins implicated of host immune defenses, preventing reactive oxygen species generation and excessive callose deposition at plasmodesmata. Furthermore, controls the hyphal constriction required for fungal growth from one rice cell to the neighboring cell, enabling host tissue colonization and blast disease. Targets downstream of the PMK1-MAPK pathway include transcription factor MST12 and pathogenicity-related genes GAS1 and GAS2, both of which are expressed during appressorium formation, even if regulation of MST12 is not associated with expression of GAS1 or GAS2. The polypeptide is Mitogen-activated protein kinase PMK11 (Pyricularia oryzae (strain 70-15 / ATCC MYA-4617 / FGSC 8958) (Rice blast fungus)).